The primary structure comprises 339 residues: Glycerol-3-phosphate dehydrogenase [NAD(P)+] (339 aa).

NADPH contacts are provided by Ser-15, Tyr-16, His-36, and Lys-110. 3 residues coordinate sn-glycerol 3-phosphate: Lys-110, Gly-139, and Thr-141. Ala-143 is an NADPH binding site. The sn-glycerol 3-phosphate site is built by Lys-195, Asp-248, Ser-258, Arg-259, and Asn-260. Lys-195 serves as the catalytic Proton acceptor. Arg-259 lines the NADPH pocket. NADPH is bound by residues Val-283 and Glu-285.

Belongs to the NAD-dependent glycerol-3-phosphate dehydrogenase family.

The protein localises to the cytoplasm. It carries out the reaction sn-glycerol 3-phosphate + NAD(+) = dihydroxyacetone phosphate + NADH + H(+). The catalysed reaction is sn-glycerol 3-phosphate + NADP(+) = dihydroxyacetone phosphate + NADPH + H(+). Its pathway is membrane lipid metabolism; glycerophospholipid metabolism. Functionally, catalyzes the reduction of the glycolytic intermediate dihydroxyacetone phosphate (DHAP) to sn-glycerol 3-phosphate (G3P), the key precursor for phospholipid synthesis. The protein is Glycerol-3-phosphate dehydrogenase [NAD(P)+] of Shigella boydii serotype 18 (strain CDC 3083-94 / BS512).